The chain runs to 137 residues: Nucleoside diphosphate kinase (137 aa).

Positions 9, 57, 85, 91, 102, and 112 each coordinate ATP. His115 acts as the Pros-phosphohistidine intermediate in catalysis.

Belongs to the NDK family. Homotetramer. Requires Mg(2+) as cofactor.

The protein resides in the cytoplasm. It catalyses the reaction a 2'-deoxyribonucleoside 5'-diphosphate + ATP = a 2'-deoxyribonucleoside 5'-triphosphate + ADP. The enzyme catalyses a ribonucleoside 5'-diphosphate + ATP = a ribonucleoside 5'-triphosphate + ADP. Functionally, major role in the synthesis of nucleoside triphosphates other than ATP. The ATP gamma phosphate is transferred to the NDP beta phosphate via a ping-pong mechanism, using a phosphorylated active-site intermediate. The sequence is that of Nucleoside diphosphate kinase from Aliarcobacter butzleri (strain RM4018) (Arcobacter butzleri).